Here is a 573-residue protein sequence, read N- to C-terminus: 2-succinyl-5-enolpyruvyl-6-hydroxy-3-cyclohexene-1-carboxylate synthase (573 aa).

The protein belongs to the TPP enzyme family. MenD subfamily. In terms of assembly, homodimer. Mg(2+) is required as a cofactor. Mn(2+) serves as cofactor. Requires thiamine diphosphate as cofactor.

It carries out the reaction isochorismate + 2-oxoglutarate + H(+) = 5-enolpyruvoyl-6-hydroxy-2-succinyl-cyclohex-3-ene-1-carboxylate + CO2. The protein operates within quinol/quinone metabolism; 1,4-dihydroxy-2-naphthoate biosynthesis; 1,4-dihydroxy-2-naphthoate from chorismate: step 2/7. It functions in the pathway quinol/quinone metabolism; menaquinone biosynthesis. Its function is as follows. Catalyzes the thiamine diphosphate-dependent decarboxylation of 2-oxoglutarate and the subsequent addition of the resulting succinic semialdehyde-thiamine pyrophosphate anion to isochorismate to yield 2-succinyl-5-enolpyruvyl-6-hydroxy-3-cyclohexene-1-carboxylate (SEPHCHC). The protein is 2-succinyl-5-enolpyruvyl-6-hydroxy-3-cyclohexene-1-carboxylate synthase of Shewanella sp. (strain W3-18-1).